We begin with the raw amino-acid sequence, 56 residues long: Ovomucoid (56 aa).

A Kazal-like domain is found at 6-56 (VDCSEYPKPDCTTEERPLCGSDNKTYGNKCNFCNAVVESNGTLTLSHFGKC). Disulfide bonds link C8–C38, C16–C35, and C24–C56. N45 is a glycosylation site (N-linked (GlcNAc...) asparagine).

It is found in the secreted. This chain is Ovomucoid, found in Francolinus pondicerianus (Grey francolin).